Reading from the N-terminus, the 333-residue chain is Ribose-phosphate pyrophosphokinase (333 aa).

Residue 58–60 participates in ATP binding; it reads DGE. Mg(2+) is bound by residues His151 and Asp190. Lys214 is an active-site residue. Residues Arg216, Asp240, and 244–248 contribute to the D-ribose 5-phosphate site; that span reads DTAGT.

This sequence belongs to the ribose-phosphate pyrophosphokinase family. Class I subfamily. In terms of assembly, homohexamer. It depends on Mg(2+) as a cofactor.

It is found in the cytoplasm. The catalysed reaction is D-ribose 5-phosphate + ATP = 5-phospho-alpha-D-ribose 1-diphosphate + AMP + H(+). It participates in metabolic intermediate biosynthesis; 5-phospho-alpha-D-ribose 1-diphosphate biosynthesis; 5-phospho-alpha-D-ribose 1-diphosphate from D-ribose 5-phosphate (route I): step 1/1. In terms of biological role, involved in the biosynthesis of the central metabolite phospho-alpha-D-ribosyl-1-pyrophosphate (PRPP) via the transfer of pyrophosphoryl group from ATP to 1-hydroxyl of ribose-5-phosphate (Rib-5-P). The sequence is that of Ribose-phosphate pyrophosphokinase from Synechocystis sp. (strain ATCC 27184 / PCC 6803 / Kazusa).